The chain runs to 654 residues: Integrator complex subunit 9 (654 aa).

The 1D-myo-inositol hexakisphosphate site is built by M1, R2, T18, F19, R504, K508, and R509.

The protein belongs to the metallo-beta-lactamase superfamily. RNA-metabolizing metallo-beta-lactamase-like family. INTS9 subfamily. As to quaternary structure, belongs to the multiprotein complex Integrator, at least composed of IntS1, IntS2, IntS3, IntS4, omd/IntS5, IntS6, defl/IntS7, IntS8, IntS9, IntS10, IntS11, IntS12, asun/IntS13, IntS14 and IntS15. The core complex associates with protein phosphatase 2A subunits mts/PP2A and Pp2A-29B, to form the Integrator-PP2A (INTAC) complex. Within the complex, interacts with IntS1 and IntS12. IntS9 is part of the RNA endonuclease subcomplex, composed of IntS4, IntS9, IntS11 and inositol hexakisphosphate (InsP6).

It localises to the nucleus. The protein resides in the cytoplasm. It is found in the cytosol. Its function is as follows. Component of the integrator complex, a multiprotein complex that terminates RNA polymerase II (Pol II) transcription in the promoter-proximal region of genes. The integrator complex provides a quality checkpoint during transcription elongation by driving premature transcription termination of transcripts that are unfavorably configured for transcriptional elongation: the complex terminates transcription by (1) catalyzing dephosphorylation of the C-terminal domain (CTD) of Pol II subunit Polr2A/Rbp1 and Spt5, and (2) degrading the exiting nascent RNA transcript via endonuclease activity. The integrator complex is also involved in the 3'-end processing of the U7 snRNA, and also the spliceosomal snRNAs U1, U2, U4 and U5. In Drosophila melanogaster (Fruit fly), this protein is Integrator complex subunit 9.